The following is a 644-amino-acid chain: ATP-dependent zinc metalloprotease FtsH (644 aa).

Residues 1–4 (MAKN) lie on the Cytoplasmic side of the membrane. Residues 5 to 25 (LILWLVIAVVLMSVFQSFGPS) form a helical membrane-spanning segment. The Periplasmic portion of the chain corresponds to 26–98 (ESNGRKVDYS…VGEPPEEPSL (73 aa)). A helical transmembrane segment spans residues 99–119 (LASIFISWFPMLLLIGVWIFF). Residues 120–644 (MRQMQGGGGK…NTMSEQLGDK (525 aa)) lie on the Cytoplasmic side of the membrane. 192–199 (GPPGTGKT) is an ATP binding site. Residue His414 participates in Zn(2+) binding. Residue Glu415 is part of the active site. Positions 418 and 492 each coordinate Zn(2+). Residues 599 to 644 (RPPAGWEDPNGTNNSDSNGTPQAPRPVDEPRTPNPGNTMSEQLGDK) are disordered. Polar residues-rich tracts occupy residues 608 to 619 (NGTNNSDSNGTP) and 632 to 644 (NPGNTMSEQLGDK).

This sequence in the central section; belongs to the AAA ATPase family. It in the C-terminal section; belongs to the peptidase M41 family. In terms of assembly, homohexamer. Zn(2+) is required as a cofactor.

Its subcellular location is the cell inner membrane. Acts as a processive, ATP-dependent zinc metallopeptidase for both cytoplasmic and membrane proteins. Plays a role in the quality control of integral membrane proteins. The protein is ATP-dependent zinc metalloprotease FtsH of Salmonella typhi.